The chain runs to 296 residues: Acetylglutamate kinase (296 aa).

Residues 69 to 70 (GG), R91, and N193 contribute to the substrate site.

The protein belongs to the acetylglutamate kinase family. ArgB subfamily.

The protein resides in the cytoplasm. The enzyme catalyses N-acetyl-L-glutamate + ATP = N-acetyl-L-glutamyl 5-phosphate + ADP. Its pathway is amino-acid biosynthesis; L-arginine biosynthesis; N(2)-acetyl-L-ornithine from L-glutamate: step 2/4. Catalyzes the ATP-dependent phosphorylation of N-acetyl-L-glutamate. This Delftia acidovorans (strain DSM 14801 / SPH-1) protein is Acetylglutamate kinase.